Reading from the N-terminus, the 361-residue chain is MKERLDNLRKRLVEVEKEVENPNLIKDVAKYKETMREHSYLSKLMEEYDNYLSIEKQIEDSKLLIQEESDAELKEMAREELHSLEAAFEKSEADLKMLLIPPDPLEEKNIIMEIRGGTGGDEAALFAADLFRMYTHYAEMKNWKYEVLSLNETELGGYKEITFSISGKYVYGSLRYESGVHRVQRVPETEGSGRIHTSAVTVAVLPEAEETEIEINQEDLRIDVMRAGGPGGQCVNTTDSAVRITHIPTGLVVICQDEKSQIKNKAKAMRVLRSRLYDLEESKKQAERAQNRKSQVGSGDRSERIRTYNFPQNRVTDHRINLTLYKLDAVMQGSLDELIDALCIAAREEMMKAADHHLEHK.

Gln233 carries the N5-methylglutamine modification. The disordered stretch occupies residues Ser282 to Phe310.

It belongs to the prokaryotic/mitochondrial release factor family. In terms of processing, methylated by PrmC. Methylation increases the termination efficiency of RF1.

The protein resides in the cytoplasm. In terms of biological role, peptide chain release factor 1 directs the termination of translation in response to the peptide chain termination codons UAG and UAA. In Treponema denticola (strain ATCC 35405 / DSM 14222 / CIP 103919 / JCM 8153 / KCTC 15104), this protein is Peptide chain release factor 1.